The primary structure comprises 322 residues: MQISISLQGQSKIIYQIFRSYYENAVLDLPQDIELREFAYQPFNSDTYVRHLTFSSVDELRSFILSNVPLHLYFSAARYQIPSAKEMEQKGWLGSDLLFDLDADDICEINVRRFCSGMEILSETCDGEVREISEITVDCINRVFENALVLKDILIQDFGLKPRIFFSGNRGFHIRVDCYNEWANLDSEDRREIAEYIMSPSPPYESNSESGPGWLGRFARGINGVKIDEQVTVDPKRLVRIPGSLNGKAGLKVIEIVNDKFEYDEYLSPFEGIVAFQSNLSGKFNVLGHEIQLRRGEITKLSAKTGVYLALKGYGVIKAHVR.

Residues Asp-100, Asp-102, and Asp-228 contribute to the active site.

The protein belongs to the eukaryotic-type primase small subunit family. As to quaternary structure, heterodimer of a small subunit (PriS) and a large subunit (PriL). Mg(2+) serves as cofactor. Mn(2+) is required as a cofactor.

Catalytic subunit of DNA primase, an RNA polymerase that catalyzes the synthesis of short RNA molecules used as primers for DNA polymerase during DNA replication. The small subunit contains the primase catalytic core and has DNA synthesis activity on its own. Binding to the large subunit stabilizes and modulates the activity, increasing the rate of DNA synthesis while decreasing the length of the DNA fragments, and conferring RNA synthesis capability. The DNA polymerase activity may enable DNA primase to also catalyze primer extension after primer synthesis. May also play a role in DNA repair. This Sulfolobus acidocaldarius (strain ATCC 33909 / DSM 639 / JCM 8929 / NBRC 15157 / NCIMB 11770) protein is DNA primase small subunit PriS.